A 390-amino-acid polypeptide reads, in one-letter code: Levoglucosan dehydrogenase (390 aa).

10 residues coordinate NADH: F13, M14, E43, T81, N83, H86, E103, K104, A130, and N132. Levoglucosan is bound at residue K104. Levoglucosan is bound by residues Y133 and Q163. NADH is bound by residues W175 and R176. The levoglucosan site is built by R176, D189, and H193. NADH is bound at residue Y335.

The protein belongs to the Gfo/Idh/MocA family. In terms of assembly, homotetramer.

It carries out the reaction levoglucosan + NAD(+) = 3-dehydrolevoglucosan + NADH + H(+). Functionally, catalyzes the oxidation of levoglucosan (1,6-anhydro-beta-D-glucose, LG) to 3-dehydrolevoglucosan (3-keto-LG). Exhibits high substrate specificity toward levoglucosan and NAD(+) for the oxidative reaction. Exhibits weak activities (about 4% compared with that of LG) toward L-sorbose and 1,5-anhydro-D-glucitol, and activity toward D-xylose is also detectable (1.7%). Can also efficiently catalyzes the NADH-dependent reduction (reverse reaction) of 3-keto-LG. This is Levoglucosan dehydrogenase from Pseudarthrobacter phenanthrenivorans (strain DSM 18606 / JCM 16027 / LMG 23796 / Sphe3) (Arthrobacter phenanthrenivorans).